We begin with the raw amino-acid sequence, 262 residues long: uncharacterized protein (262 aa).

A helical membrane pass occupies residues 13 to 35; that stretch reads VVGALLTVVVIVTAAGIIYVISH.

The protein resides in the membrane. This is an uncharacterized protein from Archaeoglobus fulgidus (strain ATCC 49558 / DSM 4304 / JCM 9628 / NBRC 100126 / VC-16).